The primary structure comprises 178 residues: uncharacterized protein (178 aa).

Positions 1-19 are cleaved as a signal peptide; that stretch reads MKKLLIVTMLFTLALSAQA.

Belongs to the opacity porin family.

This is an uncharacterized protein from Haemophilus influenzae (strain ATCC 51907 / DSM 11121 / KW20 / Rd).